Reading from the N-terminus, the 313-residue chain is Porphobilinogen deaminase (313 aa).

S-(dipyrrolylmethanemethyl)cysteine is present on cysteine 242.

It belongs to the HMBS family. In terms of assembly, monomer. Dipyrromethane serves as cofactor.

The enzyme catalyses 4 porphobilinogen + H2O = hydroxymethylbilane + 4 NH4(+). Its pathway is porphyrin-containing compound metabolism; protoporphyrin-IX biosynthesis; coproporphyrinogen-III from 5-aminolevulinate: step 2/4. Its function is as follows. Tetrapolymerization of the monopyrrole PBG into the hydroxymethylbilane pre-uroporphyrinogen in several discrete steps. This is Porphobilinogen deaminase from Pseudomonas aeruginosa (strain UCBPP-PA14).